The sequence spans 596 residues: MALIQTAFIWVAYAVAVGIVALIAAIFAYTYQTPRDRSALVSTITIITLTSLLATVLLLPVDIALVSSTTSSKLGAKKDWATPETVRNILLTLKIVYYALYSLDAVLCLLVIPFTYFFYEEYDEVDTEEGTQTLGQRLLGAAKYTLFFVVLVVILFLVGFFAPVARGGGSDMDLDYFKRLLAENHGERALTFALGLLISLGTLLYILYTSVGLALLPMSFIKSAPSISAPQLSETTASALEQNRERQRQLEGRNVGRNAGLSAKDQRELEALHREERTLVRRERLAAEARGEGKSFIVKAWTKTCAIFRPLKLVGGILLLLLSVIIWASMLITGIDKAKNSFCKQHCGYILGSINIFQPLNWVFVKSSIVFPIDYVLMALLVLFLFSSSVTGIAVIGLRFLWVRLFEIRKGHTSPQALLMATVMLTLIILAINYSIAMIIAPQYAIYGAQTFCTNPTRFPGDQPDCSNHPELIKTCSELSSGEGAEKVCTPTVVSTFLNRVTVNFPFFGALAFWAQFVFLAIFLIVFVTALFRTPKLDLSELDEDAEADEEEGLLATTGRRFGATWQDIRGKAKNQTPSRGAAGRGIRGDDDHDDD.

The next 10 helical transmembrane spans lie at 7–27, 46–66, 95–115, 145–165, 196–216, 313–333, 350–370, 376–396, 420–440, and 507–527; these read AFIWVAYAVAVGIVALIAAIF, IITLTSLLATVLLLPVDIALV, IVYYALYSLDAVLCLLVIPFT, TLFFVVLVVILFLVGFFAPVA, LLISLGTLLYILYTSVGLALL, LVGGILLLLLSVIIWASMLIT, ILGSINIFQPLNWVFVKSSIV, VLMALLVLFLFSSSVTGIAVI, MATVMLTLIILAINYSIAMII, and FFGALAFWAQFVFLAIFLIVF. A disordered region spans residues 566–596; the sequence is WQDIRGKAKNQTPSRGAAGRGIRGDDDHDDD. Basic and acidic residues predominate over residues 587–596; it reads IRGDDDHDDD.

The protein belongs to the LIMR family. LMBRD1 subfamily.

Its subcellular location is the lysosome membrane. Its function is as follows. Probable lysosomal cobalamin transporter. Required to export cobalamin from lysosomes allowing its conversion to cofactors. This Sclerotinia sclerotiorum (strain ATCC 18683 / 1980 / Ss-1) (White mold) protein is Probable lysosomal cobalamin transporter.